An 87-amino-acid chain; its full sequence is Beta-toxin Cn4 (87 aa).

The N-terminal stretch at 1–19 (MNSLLMITACLALVGTVWA) is a signal peptide. Positions 20-85 (KEGYLVNSYT…VWPLKNKTCN (66 aa)) constitute an LCN-type CS-alpha/beta domain. Intrachain disulfides connect Cys31–Cys84, Cys35–Cys60, Cys44–Cys65, and Cys48–Cys67. Asn85 carries the post-translational modification Asparagine amide.

Belongs to the long (4 C-C) scorpion toxin superfamily. Sodium channel inhibitor family. Beta subfamily. Expressed by the venom gland.

The protein localises to the secreted. In terms of biological role, beta toxins bind voltage-independently at site-4 of sodium channels (Nav) and shift the voltage of activation toward more negative potentials thereby affecting sodium channel activation and promoting spontaneous and repetitive firing. This toxin affects the activation mechanism of sodium channels of squid axon. It also competes with Cn2 in rat brain synaptosomes. Is lethal to mice. The chain is Beta-toxin Cn4 from Centruroides noxius (Mexican scorpion).